The sequence spans 695 residues: Polyribonucleotide nucleotidyltransferase (695 aa).

Mg(2+) is bound by residues D486 and D492. The region spanning 553 to 612 (PRIETMQINTSKIATVIGPGGKQIRQIIERSGAQVDINDDGVINIAASTQESINKAKELI) is the KH domain. An S1 motif domain is found at 622–690 (GKVYNGRVTS…EKGQLKLSHK (69 aa)).

Belongs to the polyribonucleotide nucleotidyltransferase family. It depends on Mg(2+) as a cofactor.

Its subcellular location is the cytoplasm. The catalysed reaction is RNA(n+1) + phosphate = RNA(n) + a ribonucleoside 5'-diphosphate. Involved in mRNA degradation. Catalyzes the phosphorolysis of single-stranded polyribonucleotides processively in the 3'- to 5'-direction. In Chlamydia trachomatis serovar D (strain ATCC VR-885 / DSM 19411 / UW-3/Cx), this protein is Polyribonucleotide nucleotidyltransferase.